The chain runs to 683 residues: E3 ubiquitin-protein ligase WAVH1 (683 aa).

The segment at 130–176 (CGICLQSVKSGQGTAIFTAECSHTFHFPCVTSRAAANHNRLASCPVC) adopts an RING-type; atypical zinc-finger fold. The region spanning 302–438 (DLVAVLDVSG…AHSRIPIHTI (137 aa)) is the VWFA domain.

Expressed in root tips and leaf primordia.

It carries out the reaction S-ubiquitinyl-[E2 ubiquitin-conjugating enzyme]-L-cysteine + [acceptor protein]-L-lysine = [E2 ubiquitin-conjugating enzyme]-L-cysteine + N(6)-ubiquitinyl-[acceptor protein]-L-lysine.. Functionally, E3 ubiquitin-protein ligase involved in the regulation of root growth. Acts as a positive regulator of root gravitropism. Possesses E3 protein ligase activity in vitro. The sequence is that of E3 ubiquitin-protein ligase WAVH1 from Arabidopsis thaliana (Mouse-ear cress).